The following is a 223-amino-acid chain: Ribose-5-phosphate isomerase A (223 aa).

Substrate contacts are provided by residues 32–35 (TGST), 85–88 (DGAD), and 98–101 (KGGG). The Proton acceptor role is filled by Glu107. Lys125 contributes to the substrate binding site.

It belongs to the ribose 5-phosphate isomerase family. In terms of assembly, homodimer.

The catalysed reaction is aldehydo-D-ribose 5-phosphate = D-ribulose 5-phosphate. It participates in carbohydrate degradation; pentose phosphate pathway; D-ribose 5-phosphate from D-ribulose 5-phosphate (non-oxidative stage): step 1/1. Its function is as follows. Catalyzes the reversible conversion of ribose-5-phosphate to ribulose 5-phosphate. The polypeptide is Ribose-5-phosphate isomerase A (Pseudomonas paraeruginosa (strain DSM 24068 / PA7) (Pseudomonas aeruginosa (strain PA7))).